Consider the following 131-residue polypeptide: M-zodatoxin-Lt8o (131 aa).

An N-terminal signal peptide occupies residues 1-20; the sequence is MKYFVVALALVAAFACIAES. Positions 21–60 are excised as a propeptide; sequence KPAESEHELAEVEEENELADLEDAVWLEHLADLSDLEEAR.

This sequence belongs to the cationic peptide 06 (cytoinsectotoxin) family. In terms of tissue distribution, expressed by the venom gland.

The protein resides in the secreted. In terms of biological role, insecticidal, cytolytic and antimicrobial peptide. Forms voltage-dependent, ion-permeable channels in membranes. At high concentration causes cell membrane lysis. This Lachesana tarabaevi (Spider) protein is M-zodatoxin-Lt8o (cit 1-14).